The sequence spans 296 residues: Maltose/maltodextrin transport system permease protein MalG (296 aa).

Residues 1 to 12 (MAMVQPKSQKLR) lie on the Cytoplasmic side of the membrane. The chain crosses the membrane as a helical span at residues 13–35 (LLITHLGLLIFIAAIMFPLLMVI). Residues 36–88 (AISLREGNFATGSLIPDKISWEHWRLALGFSVEHADGRVTPPPFPVLLWLWNS) lie on the Periplasmic side of the membrane. The region spanning 85–281 (LWNSVKIAGI…IPITLVFLLA (197 aa)) is the ABC transmembrane type-1 domain. A helical transmembrane segment spans residues 89–111 (VKIAGITAIGIVALSTTCAYAFA). Topologically, residues 112–123 (RMRFPGKATLLK) are cytoplasmic. Residues 124–143 (GMLIFQMFPAVLSLVALYAL) traverse the membrane as a helical segment. Over 144–152 (FDRLGQYIP) the chain is Periplasmic. Residues 153–175 (FIGLNTHGGVIFAYLGGIALHVW) form a helical membrane-spanning segment. Residues 176-204 (TIKGYFETIDSSLEEAAALDGATPWQAFR) lie on the Cytoplasmic side of the membrane. The chain crosses the membrane as a helical span at residues 205-227 (LVLLPLSVPILAVVFILSFIAAI). Over 228–257 (TEVPVASLLLRDVDSYTLAVGMQQYLNPQN) the chain is Periplasmic. A helical membrane pass occupies residues 258–280 (YLWGDFAAAAVLSAIPITLVFLL). The Cytoplasmic portion of the chain corresponds to 281–296 (AQRWLVNGLTAGGVKG).

It belongs to the binding-protein-dependent transport system permease family. MalFG subfamily. As to quaternary structure, the complex is composed of two ATP-binding proteins (MalK), two transmembrane proteins (MalG and MalF) and a solute-binding protein (MalE).

The protein resides in the cell inner membrane. Functionally, part of the ABC transporter complex MalEFGK involved in maltose/maltodextrin import. Probably responsible for the translocation of the substrate across the membrane. This chain is Maltose/maltodextrin transport system permease protein MalG (malG), found in Salmonella typhimurium (strain LT2 / SGSC1412 / ATCC 700720).